The sequence spans 322 residues: Cytochrome c biogenesis protein CcsA (322 aa).

8 consecutive transmembrane segments (helical) span residues 19-39 (NAIFCNLLLTMCLYWFSLIIV), 43-63 (LICNLAKFSAVNSNVILFFYL), 72-92 (FFPLSNLYESLMFLSCLLLFI), 104-124 (VIGALVLPLIVLVQGFASLSL), 150-170 (MMLSYATLLLGSLFSILYLVL), 230-250 (TIGIGFPFLTMGIISGAVWAN), 264-281 (TWALITWLIFASYLHARL), and 291-311 (AFLGSFGFFIVWVCYLGVNFL).

The protein belongs to the CcmF/CycK/Ccl1/NrfE/CcsA family. As to quaternary structure, may interact with Ccs1.

It localises to the plastid. Its subcellular location is the chloroplast thylakoid membrane. In terms of biological role, required during biogenesis of c-type cytochromes (cytochrome c6 and cytochrome f) at the step of heme attachment. This Heterosigma akashiwo (strain NIES-293 / 8280G21-1) protein is Cytochrome c biogenesis protein CcsA.